Here is a 412-residue protein sequence, read N- to C-terminus: MNDSGYQSNLSLLRVFLDEFRSVLRQESPGLIPRLAFYYVRAFLSLLCQYPNKKLASLPLYRWINLFIMCNVMTIFWTMFVALPESKNVIEMGDDLVWISGMALVFTKIFYMHLRCDEIDELISDFEYYNRELRPHNIDEEVLGWQRLCYVIESGLYINCFCLVNFFSAAIFLQPLLGEGKLPFHSVYPFQWHRLDLHPYTFWFLYIWQSLTSQHNLMSILMVDMVGISTFLQTALNLKLLCIEIRKLGDMEVSDKRFHEEFCRVVRFHQHIIKLVGKANRAFNGAFNAQLMASFSLISISTFETMAAAAVDPKMAAKFVLLMLVAFIQLSLWCVSGTLVYTQSVEVAQAAFDINDWHTKSPGIQRDISFVILRAQKPLMYVAEPFLPFTLGTYMLVLKNCYRLLALMQESM.

Over 1 to 74 the chain is Cytoplasmic; the sequence is MNDSGYQSNL…NLFIMCNVMT (74 aa). A helical transmembrane segment spans residues 75 to 95; sequence IFWTMFVALPESKNVIEMGDD. The Extracellular portion of the chain corresponds to 96–103; that stretch reads LVWISGMA. The chain crosses the membrane as a helical span at residues 104-124; it reads LVFTKIFYMHLRCDEIDELIS. Residues 125 to 169 lie on the Cytoplasmic side of the membrane; it reads DFEYYNRELRPHNIDEEVLGWQRLCYVIESGLYINCFCLVNFFSA. A helical membrane pass occupies residues 170–190; sequence AIFLQPLLGEGKLPFHSVYPF. Residues 191–229 lie on the Extracellular side of the membrane; sequence QWHRLDLHPYTFWFLYIWQSLTSQHNLMSILMVDMVGIS. The chain crosses the membrane as a helical span at residues 230 to 250; sequence TFLQTALNLKLLCIEIRKLGD. Residues 251–302 are Cytoplasmic-facing; the sequence is MEVSDKRFHEEFCRVVRFHQHIIKLVGKANRAFNGAFNAQLMASFSLISIST. Residues 303-323 form a helical membrane-spanning segment; that stretch reads FETMAAAAVDPKMAAKFVLLM. The Extracellular segment spans residues 324-330; sequence LVAFIQL. The helical transmembrane segment at 331-351 threads the bilayer; that stretch reads SLWCVSGTLVYTQSVEVAQAA. At 352–389 the chain is on the cytoplasmic side; it reads FDINDWHTKSPGIQRDISFVILRAQKPLMYVAEPFLPF. A helical membrane pass occupies residues 390-410; sequence TLGTYMLVLKNCYRLLALMQE. The Extracellular portion of the chain corresponds to 411–412; that stretch reads SM.

Belongs to the insect chemoreceptor superfamily. Heteromeric odorant receptor channel (TC 1.A.69) family. Or49a subfamily. In terms of assembly, interacts with Orco. Complexes exist early in the endomembrane system in olfactory sensory neurons (OSNs), coupling these complexes to the conserved ciliary trafficking pathway. Expressed in olfactory sensory neurons in the antenna.

It is found in the cell membrane. Odorant receptor which mediates acceptance or avoidance behavior, depending on its substrates. The odorant receptor repertoire encodes a large collection of odor stimuli that vary widely in identity, intensity, and duration. May form a complex with Orco to form odorant-sensing units, providing sensitive and prolonged odorant signaling and calcium permeability. Plays an important role in sociosexual interactions since its enhances courtship in a pheromone-dependent manner. The protein is Odorant receptor 47b (Or47b) of Drosophila melanogaster (Fruit fly).